A 505-amino-acid chain; its full sequence is Probable cytochrome P450 28a5 (505 aa).

Cys450 is a heme binding site.

This sequence belongs to the cytochrome P450 family. Heme serves as cofactor.

The protein localises to the endoplasmic reticulum membrane. Its subcellular location is the microsome membrane. Its function is as follows. May be involved in the metabolism of insect hormones and in the breakdown of synthetic insecticides. In Drosophila melanogaster (Fruit fly), this protein is Probable cytochrome P450 28a5 (Cyp28a5).